A 120-amino-acid chain; its full sequence is Chemokine vCXCL1 (120 aa).

It belongs to the intercrine alpha (chemokine CxC) family. As to quaternary structure, interacts with host CXCR1 and CXCR2.

Acts as a functional chemokine, inducing calcium mobilization, chemotaxis, and degranulation of neutrophils. Contributes to the induction of neutrophil chemotaxis by interacting with host CXCR1 and CXCR2 receptors. The chain is Chemokine vCXCL1 (UL146) from Human cytomegalovirus (strain Merlin) (HHV-5).